The primary structure comprises 205 residues: Golgi apparatus membrane protein TVP23 homolog B (205 aa).

An N-acetylmethionine modification is found at Met-1. The span at 1–21 (MLSQDSNDDTEDVSLFDAEEE) shows a compositional bias: acidic residues. The disordered stretch occupies residues 1-27 (MLSQDSNDDTEDVSLFDAEEETTNRPR). Helical transmembrane passes span 34–53 (PVAS…VYLL), 54–72 (CELL…ILLL), 126–146 (IFWL…FSAL), and 152–172 (KWLA…YGYI).

The protein belongs to the TVP23 family.

The protein resides in the membrane. The polypeptide is Golgi apparatus membrane protein TVP23 homolog B (Tvp23b) (Mus musculus (Mouse)).